Reading from the N-terminus, the 604-residue chain is Glutamine--fructose-6-phosphate aminotransferase [isomerizing] (604 aa).

Catalysis depends on C2, which acts as the Nucleophile; for GATase activity. Positions 2–218 (CGIVGVVGNR…DKELVVLTKD (217 aa)) constitute a Glutamine amidotransferase type-2 domain. SIS domains are found at residues 284–423 (IVKS…ANGK) and 456–594 (VANL…VDKP). K599 acts as the For Fru-6P isomerization activity in catalysis.

As to quaternary structure, homodimer.

It is found in the cytoplasm. The catalysed reaction is D-fructose 6-phosphate + L-glutamine = D-glucosamine 6-phosphate + L-glutamate. Functionally, catalyzes the first step in hexosamine metabolism, converting fructose-6P into glucosamine-6P using glutamine as a nitrogen source. In Streptococcus mutans serotype c (strain ATCC 700610 / UA159), this protein is Glutamine--fructose-6-phosphate aminotransferase [isomerizing].